The chain runs to 38 residues: MKVMASVKRICRNCKIIKRKGVVRVICSSDPRHKQRQG.

Belongs to the bacterial ribosomal protein bL36 family.

In Paraburkholderia phymatum (strain DSM 17167 / CIP 108236 / LMG 21445 / STM815) (Burkholderia phymatum), this protein is Large ribosomal subunit protein bL36.